A 344-amino-acid polypeptide reads, in one-letter code: tRNA N6-adenosine threonylcarbamoyltransferase (344 aa).

Residues His-111 and His-115 each contribute to the Fe cation site. Residues 136–140, Asp-169, Gly-182, and Asn-279 contribute to the substrate site; that span reads LVSGG. Asp-307 contacts Fe cation.

This sequence belongs to the KAE1 / TsaD family. Fe(2+) serves as cofactor.

The protein localises to the cytoplasm. The catalysed reaction is L-threonylcarbamoyladenylate + adenosine(37) in tRNA = N(6)-L-threonylcarbamoyladenosine(37) in tRNA + AMP + H(+). Its function is as follows. Required for the formation of a threonylcarbamoyl group on adenosine at position 37 (t(6)A37) in tRNAs that read codons beginning with adenine. Is involved in the transfer of the threonylcarbamoyl moiety of threonylcarbamoyl-AMP (TC-AMP) to the N6 group of A37, together with TsaE and TsaB. TsaD likely plays a direct catalytic role in this reaction. This Mannheimia succiniciproducens (strain KCTC 0769BP / MBEL55E) protein is tRNA N6-adenosine threonylcarbamoyltransferase.